The following is a 203-amino-acid chain: Dual specificity phosphatase 29 (203 aa).

Residues 47 to 193 (HVNQVWPRIY…LRALDIALQE (147 aa)) enclose the Tyrosine-protein phosphatase domain. Residue 137–144 (HCVMGRSR) participates in substrate binding. The active-site Phosphocysteine intermediate is cysteine 138.

It belongs to the protein-tyrosine phosphatase family. Non-receptor class dual specificity subfamily.

It is found in the cytoplasm. Its subcellular location is the nucleus. It carries out the reaction O-phospho-L-tyrosyl-[protein] + H2O = L-tyrosyl-[protein] + phosphate. The catalysed reaction is O-phospho-L-seryl-[protein] + H2O = L-seryl-[protein] + phosphate. The enzyme catalyses O-phospho-L-threonyl-[protein] + H2O = L-threonyl-[protein] + phosphate. In terms of biological role, dual specificity phosphatase able to dephosphorylate phosphotyrosine, phosphoserine and phosphothreonine residues within the same substrate, with a preference for phosphotyrosine as a substrate. Involved in the modulation of AMPK and MAPK1/2 signaling pathways. This is Dual specificity phosphatase 29 (dusp29) from Oryzias latipes (Japanese rice fish).